We begin with the raw amino-acid sequence, 105 residues long: Large ribosomal subunit protein uL24 (105 aa).

This sequence belongs to the universal ribosomal protein uL24 family. In terms of assembly, part of the 50S ribosomal subunit.

One of two assembly initiator proteins, it binds directly to the 5'-end of the 23S rRNA, where it nucleates assembly of the 50S subunit. In terms of biological role, one of the proteins that surrounds the polypeptide exit tunnel on the outside of the subunit. This chain is Large ribosomal subunit protein uL24, found in Thermotoga maritima (strain ATCC 43589 / DSM 3109 / JCM 10099 / NBRC 100826 / MSB8).